The chain runs to 387 residues: 3-ketoacyl-CoA thiolase (387 aa).

Catalysis depends on cysteine 91, which acts as the Acyl-thioester intermediate. Catalysis depends on proton acceptor residues histidine 343 and cysteine 373.

Belongs to the thiolase-like superfamily. Thiolase family. In terms of assembly, heterotetramer of two alpha chains (FadB) and two beta chains (FadA).

It is found in the cytoplasm. The catalysed reaction is an acyl-CoA + acetyl-CoA = a 3-oxoacyl-CoA + CoA. It participates in lipid metabolism; fatty acid beta-oxidation. Its function is as follows. Catalyzes the final step of fatty acid oxidation in which acetyl-CoA is released and the CoA ester of a fatty acid two carbons shorter is formed. The sequence is that of 3-ketoacyl-CoA thiolase from Shewanella loihica (strain ATCC BAA-1088 / PV-4).